A 182-amino-acid polypeptide reads, in one-letter code: Early nodulin-like protein 14 (182 aa).

An N-terminal signal peptide occupies residues 1 to 28; sequence MFLSASMASSSLHVAIFSLIFLFSLAAA. The Phytocyanin domain maps to 29-133; that stretch reads NEVTVGGKSG…GQKLSLVVIS (105 aa). A disulfide bridge links Cys-87 with Cys-121. Asn-88 and Asn-95 each carry an N-linked (GlcNAc...) asparagine glycan. A lipid anchor (GPI-anchor amidated serine) is attached at Ser-160. Residues 161-182 constitute a propeptide, removed in mature form; sequence GSVRLGGCYVVLGLVLGLCAWF.

The protein belongs to the early nodulin-like (ENODL) family. Interacts strongly and specifically with the extracellular domain of FERONIA at the synergid cell surface. As to expression, mostly expressed in seedlings and flowers, and, to a lower extent, in roots, stems and seeds, but barely in leaves.

The protein resides in the cell membrane. In terms of biological role, may act as a carbohydrate transporter. Required, together with ENODL11, ENODL12, ENODL13, ENODL14 and ENODL15, for male-female communication and pollen tube reception and burst at the synergid cell surface of the female gametophyte. The chain is Early nodulin-like protein 14 from Arabidopsis thaliana (Mouse-ear cress).